Consider the following 433-residue polypeptide: Enolase (433 aa).

Glutamine 167 is a binding site for (2R)-2-phosphoglycerate. The Proton donor role is filled by glutamate 209. Residues aspartate 246, glutamate 291, and aspartate 318 each contribute to the Mg(2+) site. Lysine 343, arginine 372, serine 373, and lysine 394 together coordinate (2R)-2-phosphoglycerate. Residue lysine 343 is the Proton acceptor of the active site.

The protein belongs to the enolase family. Component of the RNA degradosome, a multiprotein complex involved in RNA processing and mRNA degradation. It depends on Mg(2+) as a cofactor.

Its subcellular location is the cytoplasm. The protein resides in the secreted. It is found in the cell surface. The catalysed reaction is (2R)-2-phosphoglycerate = phosphoenolpyruvate + H2O. It functions in the pathway carbohydrate degradation; glycolysis; pyruvate from D-glyceraldehyde 3-phosphate: step 4/5. Catalyzes the reversible conversion of 2-phosphoglycerate (2-PG) into phosphoenolpyruvate (PEP). It is essential for the degradation of carbohydrates via glycolysis. The polypeptide is Enolase (Haemophilus ducreyi (strain 35000HP / ATCC 700724)).